Reading from the N-terminus, the 403-residue chain is CCA-adding enzyme (403 aa).

ATP-binding residues include G32 and R35. The CTP site is built by G32 and R35. Residues D45 and D47 each contribute to the Mg(2+) site. R116, D159, R162, R165, and R168 together coordinate ATP. Residues R116, D159, R162, R165, and R168 each contribute to the CTP site.

This sequence belongs to the tRNA nucleotidyltransferase/poly(A) polymerase family. Bacterial CCA-adding enzyme type 3 subfamily. As to quaternary structure, homodimer. Mg(2+) is required as a cofactor.

The enzyme catalyses a tRNA precursor + 2 CTP + ATP = a tRNA with a 3' CCA end + 3 diphosphate. It carries out the reaction a tRNA with a 3' CCA end + 2 CTP + ATP = a tRNA with a 3' CCACCA end + 3 diphosphate. Its function is as follows. Catalyzes the addition and repair of the essential 3'-terminal CCA sequence in tRNAs without using a nucleic acid template. Adds these three nucleotides in the order of C, C, and A to the tRNA nucleotide-73, using CTP and ATP as substrates and producing inorganic pyrophosphate. tRNA 3'-terminal CCA addition is required both for tRNA processing and repair. Also involved in tRNA surveillance by mediating tandem CCA addition to generate a CCACCA at the 3' terminus of unstable tRNAs. While stable tRNAs receive only 3'-terminal CCA, unstable tRNAs are marked with CCACCA and rapidly degraded. This Limosilactobacillus reuteri (strain DSM 20016) (Lactobacillus reuteri) protein is CCA-adding enzyme.